Reading from the N-terminus, the 457-residue chain is Bifunctional protein GlmU (457 aa).

A pyrophosphorylase region spans residues 1 to 230 (MSKRYAVVLA…FEESLGVNDR (230 aa)). Residues 9-12 (LAAG), Lys-23, Gln-73, and 78-79 (GT) each bind UDP-N-acetyl-alpha-D-glucosamine. Asp-103 is a Mg(2+) binding site. UDP-N-acetyl-alpha-D-glucosamine is bound by residues Gly-140, Glu-155, Asn-170, and Asn-228. Asn-228 provides a ligand contact to Mg(2+). Residues 231–251 (IALAEASKLMQRRINDNHMRN) form a linker region. An N-acetyltransferase region spans residues 252–457 (GVTLVNPENT…DYAKRLNHGK (206 aa)). Arg-333 and Lys-351 together coordinate UDP-N-acetyl-alpha-D-glucosamine. The active-site Proton acceptor is His-363. 2 residues coordinate UDP-N-acetyl-alpha-D-glucosamine: Tyr-366 and Asn-377. Acetyl-CoA contacts are provided by residues 386-387 (NY), Ala-423, and Arg-440.

In the N-terminal section; belongs to the N-acetylglucosamine-1-phosphate uridyltransferase family. The protein in the C-terminal section; belongs to the transferase hexapeptide repeat family. Homotrimer. Mg(2+) serves as cofactor.

The protein localises to the cytoplasm. The enzyme catalyses alpha-D-glucosamine 1-phosphate + acetyl-CoA = N-acetyl-alpha-D-glucosamine 1-phosphate + CoA + H(+). The catalysed reaction is N-acetyl-alpha-D-glucosamine 1-phosphate + UTP + H(+) = UDP-N-acetyl-alpha-D-glucosamine + diphosphate. It functions in the pathway nucleotide-sugar biosynthesis; UDP-N-acetyl-alpha-D-glucosamine biosynthesis; N-acetyl-alpha-D-glucosamine 1-phosphate from alpha-D-glucosamine 6-phosphate (route II): step 2/2. Its pathway is nucleotide-sugar biosynthesis; UDP-N-acetyl-alpha-D-glucosamine biosynthesis; UDP-N-acetyl-alpha-D-glucosamine from N-acetyl-alpha-D-glucosamine 1-phosphate: step 1/1. The protein operates within bacterial outer membrane biogenesis; LPS lipid A biosynthesis. Functionally, catalyzes the last two sequential reactions in the de novo biosynthetic pathway for UDP-N-acetylglucosamine (UDP-GlcNAc). The C-terminal domain catalyzes the transfer of acetyl group from acetyl coenzyme A to glucosamine-1-phosphate (GlcN-1-P) to produce N-acetylglucosamine-1-phosphate (GlcNAc-1-P), which is converted into UDP-GlcNAc by the transfer of uridine 5-monophosphate (from uridine 5-triphosphate), a reaction catalyzed by the N-terminal domain. This is Bifunctional protein GlmU from Listeria welshimeri serovar 6b (strain ATCC 35897 / DSM 20650 / CCUG 15529 / CIP 8149 / NCTC 11857 / SLCC 5334 / V8).